The chain runs to 424 residues: Zygote arrest protein 1 (424 aa).

Disordered regions lie at residues 125–175 (RTLQ…PMRF) and 196–313 (GPGP…SPEL). Residues 141-150 (GAEGTTGGGS) show a composition bias toward gly residues. Residues 289-298 (RARDGGDGRE) are compositionally biased toward basic and acidic residues. The 3CxxC-type zinc finger occupies 326-409 (KYGYYHCKDC…RQDLCGRCKG (84 aa)).

Belongs to the ZAR1 family. In terms of assembly, interacts with YBX2. In terms of processing, ubiquitinated and degradaded by the proteasome during oocyte meiotic maturation, leading to MARDO (mitochondria-associated ribonucleoprotein domain) membraneless compartment dissolution. In terms of tissue distribution, ovary and testis.

The protein localises to the cytoplasm. Its subcellular location is the cytoplasmic ribonucleoprotein granule. Its function is as follows. mRNA-binding protein that mediates formation of MARDO (mitochondria-associated ribonucleoprotein domain), a membraneless compartment that stores maternal mRNAs in oocytes. MARDO assembly around mitochondria is directed by an increase in mitochondrial membrane potential during oocyte growth. Promotes formation of MARDO phase-separated membraneless compartment by undergoing liquid-liquid phase separation upon binding to maternal mRNAs. Binds to the 3'-UTR of maternal mRNAs. Maternal mRNAs stored in the MARDO are translationally repressed. Essential for female fertility and oocyte-to-embryo transition by coordinating maternal mRNA storage, translation and degradation. The sequence is that of Zygote arrest protein 1 from Homo sapiens (Human).